The primary structure comprises 171 residues: SPbeta prophage-derived uncharacterized protein YokC (171 aa).

In Bacillus subtilis (strain 168), this protein is SPbeta prophage-derived uncharacterized protein YokC (yokC).